We begin with the raw amino-acid sequence, 536 residues long: Thiamine transport system permease protein ThiP (536 aa).

12 helical membrane-spanning segments follow: residues 16–36, 58–78, 95–115, 134–154, 199–219, 240–260, 291–311, 334–354, 373–393, 404–424, 463–483, and 506–526; these read GLCAAALMITVSLAAFLALWL, FSFWQAFLSAVLSVVPAVFLA, LCAMTLILPVLVAVFGILSVY, FSPYGLQGILLAHVFFNLPMA, VAALIFMLCFASFATVLSLGG, PARAAMLALIQMVCCLALVLL, DALLIVLALLLLLPPLVAVVV, SLRIALAAGVLCVVLTMMLLW, LSGMLILAMPGIVLATGFFLL, ADGIVIFTNALMAIPYALKVL, AQALAFACVLSIGDFGVVALF, and DGAVTALILLLLCFTLFTLIE. Residues 56-261 form the ABC transmembrane type-1 1 domain; it reads VRFSFWQAFL…VCCLALVLLS (206 aa). Residues 331–525 form the ABC transmembrane type-1 2 domain; it reads VWTSLRIALA…LLCFTLFTLI (195 aa).

It belongs to the binding-protein-dependent transport system permease family. As to quaternary structure, the complex is composed of two ATP-binding proteins (ThiQ), two transmembrane proteins (ThiP) and a solute-binding protein (ThiB).

It is found in the cell inner membrane. Its function is as follows. Part of the ABC transporter complex ThiBPQ involved in thiamine import. Probably responsible for the translocation of the substrate across the membrane. Is also involved in thiamine pyrophosphate transport. This Salmonella typhimurium (strain LT2 / SGSC1412 / ATCC 700720) protein is Thiamine transport system permease protein ThiP.